Reading from the N-terminus, the 568-residue chain is MASHVDLLTELQLLEKVPTLERLRAAQKRRAQQLKKWAQYEQDLQHRKRKHERKRSTGGRRKKVSFEASVALLEASLRNDAEEVRYFLKNKVSPDLCNEDGLTALHQCCIDNFEEIVKLLLSHGANVNAKDNELWTPLHAAATCGHINLVKILVQYGADLLAVNSDGNMPYDLCEDEPTLDVIETCMAYQGITQEKINEMRAAPEQQMISDIHCMIAAGQDLDWVDAQGATLLHIAGANGYLRAAELLLDHGVRVDVKDWDGWEPLHAAAFWGQMQMAELLVSHGASLSARTSMDEMPIDLCEEEEFKVLLLELKHKHDVIMKSQLRHKSSLSRRTSSAGSRGKVVRRASLSDRTNLYRKEYEGEAILWQQRSASEDQRNSTYNGDIRETRTDQENKDPNPRLEKPVLLSEFPTKIPHSDMDMPVENGLRAPVSTYQYALCNGDVWKVHEVPDYSMAYGNPGVADATPSWSGYKEQSPQTLLELKRQRAAAKLLSHPFLSTHLGSGVSRTGEGSSEGKAPLIGGRTSPYSSNGTSVYYTVTSGDPPLLKFKAPIEEMEEKVHGCCRIS.

Positions 15–55 (EKVPTLERLRAAQKRRAQQLKKWAQYEQDLQHRKRKHERKR) form a coiled coil. Serine 69 carries the post-translational modification Phosphoserine. ANK repeat units lie at residues 100–129 (DGLT…NVNA), 133–162 (ELWT…DLLA), 228–257 (QGAT…RVDV), and 261–290 (DGWE…SLSA). The interval 327-346 (RHKSSLSRRTSSAGSRGKVV) is disordered. 3 positions are modified to phosphoserine: serine 333, serine 337, and serine 350. A compositionally biased stretch (low complexity) spans 333-342 (SRRTSSAGSR). The segment at 373–404 (SASEDQRNSTYNGDIRETRTDQENKDPNPRLE) is disordered. Positions 386–404 (DIRETRTDQENKDPNPRLE) are enriched in basic and acidic residues. At serine 477 the chain carries Phosphoserine. The interval 504-525 (GSGVSRTGEGSSEGKAPLIGGR) is disordered. The stretch at 531–560 (SNGTSVYYTVTSGDPPLLKFKAPIEEMEEK) is one ANK 5 repeat. Cysteine 564 is lipidated: S-palmitoyl cysteine. Cysteine 565 is subject to Cysteine methyl ester. Cysteine 565 carries S-farnesyl cysteine lipidation. The propeptide at 566 to 568 (RIS) is removed in mature form.

Interacts with PPP1CA, PPP1CB and MSN. Interacts (via its fourth ankyrin repeat) with the mature dimeric form of RPSA/LAMR1. Interacts with EEF1A1. Interacts with PTEN. Interacts with ECE1. In terms of processing, phosphorylated by PKA and, after PKA priming, by GSK3B. Phosphorylation by GSK3B reduces its association with PP1C and enhances PP1C activity. Dephosphorylation by its associated PP1C results in enhanced association with PP1C, but reduced PP1C activity.

It localises to the cell membrane. It is found in the nucleus. The protein resides in the cell projection. In terms of biological role, regulator of protein phosphatase 1 (PP1) that acts as a positive regulator of pulmonary endothelial cell (EC) barrier function. Protects the endothelial barrier from lipopolysaccharide (LPS)-induced vascular leakage. Involved in the regulation of the PI3K/AKT signaling pathway. Involved in the regulation of angiogenesis and endothelial cell proliferation through the control of ECE1 dephosphorylation, trafficking and activity. Involved in the regulation of endothelial cell filopodia extension. May be a downstream target for TGF-beta1 signaling cascade in endothelial cells. Involved in PKA-mediated moesin dephosphorylation which is important in EC barrier protection against thrombin stimulation. Promotes the interaction of PPP1CA with RPSA/LAMR1 and in turn facilitates the dephosphorylation of RPSA/LAMR1. Involved in the dephosphorylation of EEF1A1. This Bos taurus (Bovine) protein is Protein phosphatase 1 regulatory inhibitor subunit 16B (PPP1R16B).